Consider the following 250-residue polypeptide: Ditrans,polycis-undecaprenyl-diphosphate synthase ((2E,6E)-farnesyl-diphosphate specific) (250 aa).

Asp20 is a catalytic residue. Mg(2+) is bound at residue Asp20. Substrate is bound by residues 21 to 24, Trp25, Arg33, His37, and 65 to 67; these read GNGR and SSE. Catalysis depends on Asn68, which acts as the Proton acceptor. Residues Trp69, Arg71, Arg188, and 194-196 each bind substrate; that span reads RIS. Glu207 serves as a coordination point for Mg(2+).

It belongs to the UPP synthase family. In terms of assembly, homodimer. It depends on Mg(2+) as a cofactor.

The enzyme catalyses 8 isopentenyl diphosphate + (2E,6E)-farnesyl diphosphate = di-trans,octa-cis-undecaprenyl diphosphate + 8 diphosphate. Its function is as follows. Catalyzes the sequential condensation of isopentenyl diphosphate (IPP) with (2E,6E)-farnesyl diphosphate (E,E-FPP) to yield (2Z,6Z,10Z,14Z,18Z,22Z,26Z,30Z,34E,38E)-undecaprenyl diphosphate (di-trans,octa-cis-UPP). UPP is the precursor of glycosyl carrier lipid in the biosynthesis of bacterial cell wall polysaccharide components such as peptidoglycan and lipopolysaccharide. This chain is Ditrans,polycis-undecaprenyl-diphosphate synthase ((2E,6E)-farnesyl-diphosphate specific), found in Vibrio cholerae serotype O1 (strain ATCC 39315 / El Tor Inaba N16961).